The sequence spans 147 residues: MAVHKEVSFVAYLLIVLGMFLYVDALGCTKECGNLGFGICPRSEGSPTNPICINCCSGYKGCNYYSAFGRFICEGESDPKNPKACPLNCDTNIAYSRCPRSEGKSLIYPTGCTTCCTGYKGCYYFGTNGKFVCEGESDEPKPYMSTA.

A signal peptide spans 1–25; that stretch reads MAVHKEVSFVAYLLIVLGMFLYVDA. 2 repeat units span residues 25–81 and 82–141. Disulfide bonds link cysteine 28–cysteine 116, cysteine 32–cysteine 112, cysteine 40–cysteine 122, cysteine 52–cysteine 89, cysteine 55–cysteine 73, cysteine 56–cysteine 85, cysteine 62–cysteine 98, and cysteine 115–cysteine 133.

It belongs to the protease inhibitor I20 (potato type II proteinase inhibitor) family.

The polypeptide is Proteinase inhibitor type-2 (Solanum tuberosum (Potato)).